The primary structure comprises 224 residues: UPF0758 protein Pfl01_5539 (224 aa).

Positions 102–224 constitute an MPN domain; the sequence is ALENPQVVRD…PLSMAECGWM (123 aa). Zn(2+)-binding residues include His173, His175, and Asp186. A JAMM motif motif is present at residues 173-186; the sequence is HNHPSGNSDPSQAD.

This sequence belongs to the UPF0758 family.

This chain is UPF0758 protein Pfl01_5539, found in Pseudomonas fluorescens (strain Pf0-1).